The chain runs to 276 residues: Malectin-A (276 aa).

The first 26 residues, 1–26, serve as a signal peptide directing secretion; sequence MLSIRTVLGPLATILLTVLGPFGAHG. The Lumenal segment spans residues 27–253; sequence SGLADKVIWA…TPNPYASDNS (227 aa). Residues Tyr67, Tyr89, Tyr116, Phe117, and Asp186 each coordinate a carbohydrate. The segment at 204-247 is disordered; the sequence is PMLQPHPGLEKKEEEEEEEEEEGSTSKKQINKNRVQSGPRTPNP. Positions 216-226 are enriched in acidic residues; it reads EEEEEEEEEEG. Over residues 229 to 247 the composition is skewed to polar residues; it reads SKKQINKNRVQSGPRTPNP. Asn252 carries N-linked (GlcNAc...) asparagine glycosylation. Residues 254-274 form a helical membrane-spanning segment; sequence SLMFPILVAFGVFIPTLFCLC. The Cytoplasmic segment spans residues 275–276; that stretch reads RL.

The protein belongs to the malectin family. As to expression, widely expressed throughout development including the anterior neuroectoderm and neural crest at stages 18 and 20, and the retina, hatching gland, otic vesicle, epibranchial placodes, pronephros and tail tip of later states. At stage 41, expressed in the liver, pancreas, branchial arches and proctodeum. Expressed broadly in adults in fat, intestine, gall bladder, eye, muscle, kidney, stomach, liver, heart, pancreas and lung.

The protein resides in the endoplasmic reticulum membrane. Functionally, carbohydrate-binding protein with a strong ligand preference for Glc2-N-glycan. May play a role in the early steps of protein N-glycosylation. Can bind di- or higher oligomers but not monomers of glucose, including maltose, maltotriose, maltotetraose, maltoheptaose, nigerose, kojibose, cellobiose and isomaltose, although based on their subcellular locations, these are unlikely to all be physiological ligands. This chain is Malectin-A, found in Xenopus laevis (African clawed frog).